Reading from the N-terminus, the 499-residue chain is Cytochrome P450 monooxygenase ausI (499 aa).

The chain crosses the membrane as a helical span at residues 10–30 (PLGQPLIAGFVVVSAVLYLLY). Position 439 (C439) interacts with heme. An N-linked (GlcNAc...) asparagine glycan is attached at N483.

The protein belongs to the cytochrome P450 family. It depends on heme as a cofactor.

Its subcellular location is the membrane. The protein operates within secondary metabolite biosynthesis; terpenoid biosynthesis. In terms of biological role, cytochrome P450 monooxygenase; part of the gene cluster B that mediates the biosynthesis of austinol and dehydroaustinol, two fungal meroterpenoids. The first step of the pathway is the synthesis of 3,5-dimethylorsellinic acid by the polyketide synthase ausA. 3,5-dimethylorsellinic acid is then prenylated by the polyprenyl transferase ausN. Further epoxidation by the FAD-dependent monooxygenase ausM and cyclization by the probable terpene cyclase ausL lead to the formation of protoaustinoid A. Protoaustinoid A is then oxidized to spiro-lactone preaustinoid A3 by the combined action of the FAD-binding monooxygenases ausB and ausC, and the dioxygenase ausE. Acid-catalyzed keto-rearrangement and ring contraction of the tetraketide portion of preaustinoid A3 by ausJ lead to the formation of preaustinoid A4. The aldo-keto reductase ausK, with the help of ausH, is involved in the next step by transforming preaustinoid A4 into isoaustinone which is in turn hydroxylated by the P450 monooxygenase ausI to form austinolide. Finally, the cytochrome P450 monooxygenase ausG modifies austinolide to austinol. Austinol can be further modified to dehydroaustinol which forms a diffusible complex with diorcinol that initiates conidiation. Due to genetic rearrangements of the clusters and the subsequent loss of some enzymes, the end products of the Emericella nidulans austinoid biosynthesis clusters are austinol and dehydroaustinol, even if additional enzymes, such as the O-acetyltransferase ausQ and the cytochrome P450 monooxygenase ausR are still functional. The polypeptide is Cytochrome P450 monooxygenase ausI (Emericella nidulans (strain FGSC A4 / ATCC 38163 / CBS 112.46 / NRRL 194 / M139) (Aspergillus nidulans)).